A 129-amino-acid chain; its full sequence is uncharacterized protein (129 aa).

An HIT domain is found at 3-109 (IFCKIINGEI…IPRYEGDGEV (107 aa)). The Histidine triad motif signature appears at 94–98 (HVHFH).

This is an uncharacterized protein from Methanocaldococcus jannaschii (strain ATCC 43067 / DSM 2661 / JAL-1 / JCM 10045 / NBRC 100440) (Methanococcus jannaschii).